The sequence spans 221 residues: MNFLTYKLLNLEELKILKLNLNKQNELWESGKMTAGSQASKVKENLQLNRNSEISKKYSQLIRKKIITNPLIKSFALPKTIHGIMFTKSLQNMHYGRHIDNPFMSSGRSDLSFTISLTNKADYQGGELVIETLNSEKKLKLDAGEIIIYPSTYLHSVKKVKNGERLVCVGWIESYVKSIEEREYLFDLDAGAKGLLAKYGRSDELDNIFKSYSNLLRLLGN.

Residues T80–S174 form the Fe2OG dioxygenase domain. Positions 98, 100, and 155 each coordinate Fe cation. Residue R165 coordinates 2-oxoglutarate.

It depends on Fe(2+) as a cofactor. The cofactor is L-ascorbate.

The protein is PKHD-type hydroxylase P9515_13321 of Prochlorococcus marinus (strain MIT 9515).